Consider the following 183-residue polypeptide: Large ribosomal subunit protein uL5 (183 aa).

Belongs to the universal ribosomal protein uL5 family. Part of the 50S ribosomal subunit; part of the 5S rRNA/L5/L18/L25 subcomplex. Contacts the 5S rRNA and the P site tRNA. Forms a bridge to the 30S subunit in the 70S ribosome.

Its function is as follows. This is one of the proteins that bind and probably mediate the attachment of the 5S RNA into the large ribosomal subunit, where it forms part of the central protuberance. In the 70S ribosome it contacts protein S13 of the 30S subunit (bridge B1b), connecting the 2 subunits; this bridge is implicated in subunit movement. Contacts the P site tRNA; the 5S rRNA and some of its associated proteins might help stabilize positioning of ribosome-bound tRNAs. The sequence is that of Large ribosomal subunit protein uL5 from Pseudothermotoga lettingae (strain ATCC BAA-301 / DSM 14385 / NBRC 107922 / TMO) (Thermotoga lettingae).